Here is a 72-residue protein sequence, read N- to C-terminus: Translation initiation factor IF-1 (72 aa).

Residues 1 to 72 (MAKQDVIELE…SRGRITYRYK (72 aa)) enclose the S1-like domain.

It belongs to the IF-1 family. In terms of assembly, component of the 30S ribosomal translation pre-initiation complex which assembles on the 30S ribosome in the order IF-2 and IF-3, IF-1 and N-formylmethionyl-tRNA(fMet); mRNA recruitment can occur at any time during PIC assembly.

Its subcellular location is the cytoplasm. Functionally, one of the essential components for the initiation of protein synthesis. Stabilizes the binding of IF-2 and IF-3 on the 30S subunit to which N-formylmethionyl-tRNA(fMet) subsequently binds. Helps modulate mRNA selection, yielding the 30S pre-initiation complex (PIC). Upon addition of the 50S ribosomal subunit IF-1, IF-2 and IF-3 are released leaving the mature 70S translation initiation complex. The protein is Translation initiation factor IF-1 of Staphylococcus epidermidis (strain ATCC 35984 / DSM 28319 / BCRC 17069 / CCUG 31568 / BM 3577 / RP62A).